The following is a 288-amino-acid chain: uncharacterized protein (288 aa).

An HTH lysR-type domain is found at 1 to 59; the sequence is MDKLNAISIFCKVIETQSFTLAAKQQNISVAMASKLVSQLEEHLKTRLLQRTTRKIMPT. The segment at residues 19-38 is a DNA-binding region (H-T-H motif); sequence FTLAAKQQNISVAMASKLVS.

This sequence belongs to the LysR transcriptional regulatory family.

This is an uncharacterized protein from Haemophilus influenzae (strain ATCC 51907 / DSM 11121 / KW20 / Rd).